Here is a 478-residue protein sequence, read N- to C-terminus: Protein nucleotidyltransferase YdiU (478 aa).

Positions 83, 85, 86, 106, 118, 119, 169, and 176 each coordinate ATP. Catalysis depends on Asp-245, which acts as the Proton acceptor. The Mg(2+) site is built by Asn-246 and Asp-255. Residue Asp-255 participates in ATP binding.

It belongs to the SELO family. Requires Mg(2+) as cofactor. It depends on Mn(2+) as a cofactor.

It carries out the reaction L-seryl-[protein] + ATP = 3-O-(5'-adenylyl)-L-seryl-[protein] + diphosphate. The enzyme catalyses L-threonyl-[protein] + ATP = 3-O-(5'-adenylyl)-L-threonyl-[protein] + diphosphate. The catalysed reaction is L-tyrosyl-[protein] + ATP = O-(5'-adenylyl)-L-tyrosyl-[protein] + diphosphate. It catalyses the reaction L-histidyl-[protein] + UTP = N(tele)-(5'-uridylyl)-L-histidyl-[protein] + diphosphate. It carries out the reaction L-seryl-[protein] + UTP = O-(5'-uridylyl)-L-seryl-[protein] + diphosphate. The enzyme catalyses L-tyrosyl-[protein] + UTP = O-(5'-uridylyl)-L-tyrosyl-[protein] + diphosphate. Functionally, nucleotidyltransferase involved in the post-translational modification of proteins. It can catalyze the addition of adenosine monophosphate (AMP) or uridine monophosphate (UMP) to a protein, resulting in modifications known as AMPylation and UMPylation. In Exiguobacterium sp. (strain ATCC BAA-1283 / AT1b), this protein is Protein nucleotidyltransferase YdiU.